The chain runs to 510 residues: NAD(P)H-quinone oxidoreductase subunit 2 B, chloroplastic (510 aa).

13 consecutive transmembrane segments (helical) span residues 24–44 (LLLF…GLIL), 57–77 (IPWL…ALLF), 99–119 (IFQF…VEYI), 124–144 (MAIT…MFLC), 150–170 (ITIF…SGYT), 183–203 (YLLM…WLYG), 229–249 (ISIA…PAPF), 295–315 (WHLL…LVAI), 323–343 (MLAY…IVGD), 347–367 (GYAS…GTFA), 395–415 (ALSS…AGFF), 418–438 (LHLF…IGLL), and 484–504 (MIVC…IIAI).

The protein belongs to the complex I subunit 2 family. NDH is composed of at least 16 different subunits, 5 of which are encoded in the nucleus.

Its subcellular location is the plastid. It localises to the chloroplast thylakoid membrane. It carries out the reaction a plastoquinone + NADH + (n+1) H(+)(in) = a plastoquinol + NAD(+) + n H(+)(out). The enzyme catalyses a plastoquinone + NADPH + (n+1) H(+)(in) = a plastoquinol + NADP(+) + n H(+)(out). Functionally, NDH shuttles electrons from NAD(P)H:plastoquinone, via FMN and iron-sulfur (Fe-S) centers, to quinones in the photosynthetic chain and possibly in a chloroplast respiratory chain. The immediate electron acceptor for the enzyme in this species is believed to be plastoquinone. Couples the redox reaction to proton translocation, and thus conserves the redox energy in a proton gradient. This is NAD(P)H-quinone oxidoreductase subunit 2 B, chloroplastic from Ceratophyllum demersum (Rigid hornwort).